Here is a 186-residue protein sequence, read N- to C-terminus: Putative 5'(3')-deoxyribonucleotidase (186 aa).

The active-site Nucleophile is the Asp-6. 3 residues coordinate Mg(2+): Asp-6, Asp-8, and Asp-137. Asp-8 (proton donor) is an active-site residue.

Belongs to the 5'(3')-deoxyribonucleotidase family. It depends on Mg(2+) as a cofactor.

Dephosphorylates the 5' and 2'(3')-phosphates of deoxyribonucleotides. The chain is Putative 5'(3')-deoxyribonucleotidase from Bordetella pertussis (strain Tohama I / ATCC BAA-589 / NCTC 13251).